The sequence spans 611 residues: BTB/POZ domain-containing protein 9 (611 aa).

Residues 36-104 (GDVTFVVEKK…IYTGRATLTD (69 aa)) form the BTB domain. Residues 142 to 240 (VCMTFDVASL…SLTELLNVVR (99 aa)) enclose the BACK domain. A disordered region spans residues 560–611 (QSAQKDSSDEPGTGGASAAGQQLDPHALQAPSGSSLPSSPGSNSRSPNRQHQ). Residues 586 to 611 (ALQAPSGSSLPSSPGSNSRSPNRQHQ) are compositionally biased toward low complexity.

The protein is BTB/POZ domain-containing protein 9 (BTBD9) of Bos taurus (Bovine).